Here is a 132-residue protein sequence, read N- to C-terminus: Small ribosomal subunit protein uS8 (132 aa).

Belongs to the universal ribosomal protein uS8 family. Part of the 30S ribosomal subunit. Contacts proteins S5 and S12.

In terms of biological role, one of the primary rRNA binding proteins, it binds directly to 16S rRNA central domain where it helps coordinate assembly of the platform of the 30S subunit. The polypeptide is Small ribosomal subunit protein uS8 (Clostridium botulinum (strain ATCC 19397 / Type A)).